We begin with the raw amino-acid sequence, 133 residues long: Small ribosomal subunit protein uS8 (133 aa).

The protein belongs to the universal ribosomal protein uS8 family. In terms of assembly, part of the 30S ribosomal subunit. Contacts proteins S5 and S12.

One of the primary rRNA binding proteins, it binds directly to 16S rRNA central domain where it helps coordinate assembly of the platform of the 30S subunit. The sequence is that of Small ribosomal subunit protein uS8 from Trichormus variabilis (strain ATCC 29413 / PCC 7937) (Anabaena variabilis).